The chain runs to 199 residues: uncharacterized protein (199 aa).

The stretch at 72-116 forms a coiled coil; that stretch reads EIYSEIENEESDIEEMSEEMKAFFAKTQEHRQKLKEQRAAEKRKE. Residues 98–117 show a composition bias toward basic and acidic residues; sequence TQEHRQKLKEQRAAEKRKEG. The interval 98 to 127 is disordered; that stretch reads TQEHRQKLKEQRAAEKRKEGQSSSKSQEEY.

This is an uncharacterized protein from Caenorhabditis elegans.